The chain runs to 426 residues: MKLQKPKGTQDILPEDAAKWQYVESVARDTFSQYNYGEIRTPMFEHYEVISRSVGDTTDIVTKEMYDFYDKGDRHITLRPEGTAPVVRSYVENKLFAPEVQKPVKLYYIGSMFRYERPQAGRLREFHQIGVECFGAANPATDVETIAMAYHLFEKLGIKDVTLHLNSLGSPESRSAYRQTLIDYLTPMRDQLSKDSQRRLDENPLRVLDSKEKEDKLAVEKAPSILDYLDEESQAHFEAVKDMLEALDIPYVIDTNMVRGLDYYNHTIFEFITSVEGSDLTICAGGRYDSLVGYFGGPETPGFGFGLGLERLLMIIEKQGITLPIETEMDVYLAVLGDSANSKALELVQAIRRQGFTAERDYLGRKIKAQFKSADTFKAKLVMTLGESEVEAGKAVIKNNRSRQEVEVSFEDMMTNFANISEQLLS.

This sequence belongs to the class-II aminoacyl-tRNA synthetase family. In terms of assembly, homodimer.

The protein localises to the cytoplasm. The enzyme catalyses tRNA(His) + L-histidine + ATP = L-histidyl-tRNA(His) + AMP + diphosphate + H(+). This chain is Histidine--tRNA ligase, found in Streptococcus pyogenes serotype M28 (strain MGAS6180).